Consider the following 506-residue polypeptide: Alpha-1,3/1,6-mannosyltransferase alg2 (506 aa).

Helical transmembrane passes span 82–104 and 118–138; these read SIFG…MILL and LSTC…YCHF. Asn-299 is a glycosylation site (N-linked (GlcNAc...) asparagine). Transmembrane regions (helical) follow at residues 443–463 and 481–501; these read LLAV…AATV and LGFM…TVYA.

This sequence belongs to the glycosyltransferase group 1 family. Glycosyltransferase 4 subfamily.

Its subcellular location is the endoplasmic reticulum membrane. The catalysed reaction is a beta-D-Man-(1-&gt;4)-beta-D-GlcNAc-(1-&gt;4)-alpha-D-GlcNAc-diphospho-di-trans,poly-cis-dolichol + GDP-alpha-D-mannose = an alpha-D-Man-(1-&gt;3)-beta-D-Man-(1-&gt;4)-beta-D-GlcNAc-(1-&gt;4)-alpha-D-GlcNAc-diphospho-di-trans,poly-cis-dolichol + GDP + H(+). The enzyme catalyses an alpha-D-Man-(1-&gt;3)-beta-D-Man-(1-&gt;4)-beta-D-GlcNAc-(1-&gt;4)-alpha-D-GlcNAc-diphospho-di-trans,poly-cis-dolichol + GDP-alpha-D-mannose = an alpha-D-Man-(1-&gt;3)-[alpha-D-Man-(1-&gt;6)]-beta-D-Man-(1-&gt;4)-beta-D-GlcNAc-(1-&gt;4)-alpha-D-GlcNAc-diphospho-di-trans,poly-cis-dolichol + GDP + H(+). Its pathway is protein modification; protein glycosylation. Its function is as follows. Mannosylates Man(2)GlcNAc(2)-dolichol diphosphate and Man(1)GlcNAc(2)-dolichol diphosphate to form Man(3)GlcNAc(2)-dolichol diphosphate. This chain is Alpha-1,3/1,6-mannosyltransferase alg2 (alg2), found in Schizosaccharomyces pombe (strain 972 / ATCC 24843) (Fission yeast).